The sequence spans 270 residues: 4-hydroxy-tetrahydrodipicolinate reductase (270 aa).

Residues 11 to 16 and E37 each bind NAD(+); that span reads GAGGRM. R38 lines the NADP(+) pocket. Residues 101–103 and 125–128 contribute to the NAD(+) site; these read GTT and APNM. The Proton donor/acceptor role is filled by H158. H159 lines the (S)-2,3,4,5-tetrahydrodipicolinate pocket. Residue K162 is the Proton donor of the active site. 168–169 provides a ligand contact to (S)-2,3,4,5-tetrahydrodipicolinate; the sequence is GT.

Belongs to the DapB family.

Its subcellular location is the cytoplasm. The catalysed reaction is (S)-2,3,4,5-tetrahydrodipicolinate + NAD(+) + H2O = (2S,4S)-4-hydroxy-2,3,4,5-tetrahydrodipicolinate + NADH + H(+). The enzyme catalyses (S)-2,3,4,5-tetrahydrodipicolinate + NADP(+) + H2O = (2S,4S)-4-hydroxy-2,3,4,5-tetrahydrodipicolinate + NADPH + H(+). Its pathway is amino-acid biosynthesis; L-lysine biosynthesis via DAP pathway; (S)-tetrahydrodipicolinate from L-aspartate: step 4/4. In terms of biological role, catalyzes the conversion of 4-hydroxy-tetrahydrodipicolinate (HTPA) to tetrahydrodipicolinate. This chain is 4-hydroxy-tetrahydrodipicolinate reductase, found in Shewanella sp. (strain MR-4).